The chain runs to 339 residues: 3-isopropylmalate dehydrogenase (339 aa).

Residues Arg-87, Arg-97, Arg-124, and Asp-214 each coordinate substrate. The Mg(2+) site is built by Asp-214, Asp-238, and Asp-242. 274-286 contributes to the NAD(+) binding site; that stretch reads GSAPDIAGQGIAD.

It belongs to the isocitrate and isopropylmalate dehydrogenases family. LeuB type 2 subfamily. In terms of assembly, homodimer. It depends on Mg(2+) as a cofactor. Mn(2+) is required as a cofactor.

The protein resides in the cytoplasm. It carries out the reaction (2R,3S)-3-isopropylmalate + NAD(+) = 4-methyl-2-oxopentanoate + CO2 + NADH. It participates in amino-acid biosynthesis; L-leucine biosynthesis; L-leucine from 3-methyl-2-oxobutanoate: step 3/4. Functionally, catalyzes the oxidation of 3-carboxy-2-hydroxy-4-methylpentanoate (3-isopropylmalate) to 3-carboxy-4-methyl-2-oxopentanoate. The product decarboxylates to 4-methyl-2 oxopentanoate. The chain is 3-isopropylmalate dehydrogenase from Mycobacterium marinum (strain ATCC BAA-535 / M).